The sequence spans 148 residues: Insoluble matrix shell protein 1 (148 aa).

Residues 105 to 128 are disordered; sequence KSGRTEARNTDDSGDPIIDPRTAD.

In terms of tissue distribution, component of the acid-insoluble organic matrix of the calcified shell.

The protein resides in the secreted. This chain is Insoluble matrix shell protein 1, found in Ruditapes philippinarum (Japanese carpet shell).